The chain runs to 76 residues: Sulfur carrier protein TusA (76 aa).

Cys15 functions as the Cysteine persulfide intermediate in the catalytic mechanism.

The protein belongs to the sulfur carrier protein TusA family. Mostly a monomer, a small portion forms homodimer via intermolecular disulfide bonds. Tightly interacts with DsrEFH.

It is found in the cytoplasm. The protein operates within energy metabolism; sulfur metabolism. In terms of biological role, sulfur carrier protein involved in sulfur trafficking for oxidative dissimilatory sulfur metabolism. Component of a sulfur relay system that starts with the sulfur-mobilizing rhodanese-like protein Rhd_2599 (Alvin_2599), which transfers the sulfur from a low-molecular-weight thiol, maybe glutathione, to the TusA protein (Alvin_2600); TusA serves as the sulfur donor for DsrEFH, which persulfurates DsrC; persulfurated DsrC very probably serves as a direct substrate for reverse-acting sulfite reductase, DsrAB. TusA seems to be not exclusively dedicated to sulfur oxidation and may have other important roles in the cell. Might also act as a sulfur mediator required for 2-thiouridine formation of tRNA. This Allochromatium vinosum (strain ATCC 17899 / DSM 180 / NBRC 103801 / NCIMB 10441 / D) (Chromatium vinosum) protein is Sulfur carrier protein TusA.